We begin with the raw amino-acid sequence, 271 residues long: Tryptophan synthase alpha chain (271 aa).

Residues glutamate 49 and aspartate 60 each act as proton acceptor in the active site.

Belongs to the TrpA family. Tetramer of two alpha and two beta chains.

It catalyses the reaction (1S,2R)-1-C-(indol-3-yl)glycerol 3-phosphate + L-serine = D-glyceraldehyde 3-phosphate + L-tryptophan + H2O. The protein operates within amino-acid biosynthesis; L-tryptophan biosynthesis; L-tryptophan from chorismate: step 5/5. The alpha subunit is responsible for the aldol cleavage of indoleglycerol phosphate to indole and glyceraldehyde 3-phosphate. The protein is Tryptophan synthase alpha chain of Azoarcus sp. (strain BH72).